Reading from the N-terminus, the 131-residue chain is MIVGLGTDIVEIARIEARIPTAGDEALLSCRLAKRVLTKTEFALFVASSQPGRYLAKRFAAKEAAAKALGTGIGRGVSFQHIEISNNTNGAPLVAFSDGAAERLAQLGGSRAHLSIADEKHYATATVILES.

The Mg(2+) site is built by aspartate 8 and glutamate 63.

This sequence belongs to the P-Pant transferase superfamily. AcpS family. Mg(2+) serves as cofactor.

The protein localises to the cytoplasm. The enzyme catalyses apo-[ACP] + CoA = holo-[ACP] + adenosine 3',5'-bisphosphate + H(+). In terms of biological role, transfers the 4'-phosphopantetheine moiety from coenzyme A to a Ser of acyl-carrier-protein. The protein is Holo-[acyl-carrier-protein] synthase of Shewanella halifaxensis (strain HAW-EB4).